The following is a 227-amino-acid chain: Cytochrome c oxidase subunit 2 (227 aa).

The Mitochondrial intermembrane portion of the chain corresponds to 1-14 (MAYPMQLGFQDATS). The helical transmembrane segment at 15-45 (PIMEELLHFHDHTLMIVFLISSLVLYIISLM) threads the bilayer. Over 46–59 (LTTKLTHTSTMDAQ) the chain is Mitochondrial matrix. The helical transmembrane segment at 60 to 87 (EVETIWTILPAIILILIALPSLRILYMM) threads the bilayer. At 88–227 (DEINNPSLTV…YFEKWSASML (140 aa)) the chain is on the mitochondrial intermembrane side. Residues His-161, Cys-196, Glu-198, Cys-200, His-204, and Met-207 each contribute to the Cu cation site. Glu-198 serves as a coordination point for Mg(2+). Position 218 is a phosphotyrosine (Tyr-218).

It belongs to the cytochrome c oxidase subunit 2 family. As to quaternary structure, component of the cytochrome c oxidase (complex IV, CIV), a multisubunit enzyme composed of 14 subunits. The complex is composed of a catalytic core of 3 subunits MT-CO1, MT-CO2 and MT-CO3, encoded in the mitochondrial DNA, and 11 supernumerary subunits COX4I, COX5A, COX5B, COX6A, COX6B, COX6C, COX7A, COX7B, COX7C, COX8 and NDUFA4, which are encoded in the nuclear genome. The complex exists as a monomer or a dimer and forms supercomplexes (SCs) in the inner mitochondrial membrane with NADH-ubiquinone oxidoreductase (complex I, CI) and ubiquinol-cytochrome c oxidoreductase (cytochrome b-c1 complex, complex III, CIII), resulting in different assemblies (supercomplex SCI(1)III(2)IV(1) and megacomplex MCI(2)III(2)IV(2)). Found in a complex with TMEM177, COA6, COX18, COX20, SCO1 and SCO2. Interacts with TMEM177 in a COX20-dependent manner. Interacts with COX20. Interacts with COX16. Cu cation is required as a cofactor.

The protein localises to the mitochondrion inner membrane. The enzyme catalyses 4 Fe(II)-[cytochrome c] + O2 + 8 H(+)(in) = 4 Fe(III)-[cytochrome c] + 2 H2O + 4 H(+)(out). Functionally, component of the cytochrome c oxidase, the last enzyme in the mitochondrial electron transport chain which drives oxidative phosphorylation. The respiratory chain contains 3 multisubunit complexes succinate dehydrogenase (complex II, CII), ubiquinol-cytochrome c oxidoreductase (cytochrome b-c1 complex, complex III, CIII) and cytochrome c oxidase (complex IV, CIV), that cooperate to transfer electrons derived from NADH and succinate to molecular oxygen, creating an electrochemical gradient over the inner membrane that drives transmembrane transport and the ATP synthase. Cytochrome c oxidase is the component of the respiratory chain that catalyzes the reduction of oxygen to water. Electrons originating from reduced cytochrome c in the intermembrane space (IMS) are transferred via the dinuclear copper A center (CU(A)) of subunit 2 and heme A of subunit 1 to the active site in subunit 1, a binuclear center (BNC) formed by heme A3 and copper B (CU(B)). The BNC reduces molecular oxygen to 2 water molecules using 4 electrons from cytochrome c in the IMS and 4 protons from the mitochondrial matrix. The sequence is that of Cytochrome c oxidase subunit 2 (MT-CO2) from Boselaphus tragocamelus (Nilgai).